The following is a 415-amino-acid chain: Esterase FrsA (415 aa).

Positions 1-23 are disordered; it reads MANRNLSESLFKPRQKHQETSTL.

Belongs to the FrsA family.

It carries out the reaction a carboxylic ester + H2O = an alcohol + a carboxylate + H(+). Catalyzes the hydrolysis of esters. This chain is Esterase FrsA, found in Photorhabdus laumondii subsp. laumondii (strain DSM 15139 / CIP 105565 / TT01) (Photorhabdus luminescens subsp. laumondii).